A 362-amino-acid polypeptide reads, in one-letter code: Alpha-tubulin N-acetyltransferase (362 aa).

Positions 1-177 (MQFGCNVAEA…NNFLMLDASI (177 aa)) constitute an N-acetyltransferase domain. Acetyl-CoA contacts are provided by residues 111–124 (FYTH…GIGT) and 147–156 (SPKLLAFLSK).

The protein belongs to the acetyltransferase ATAT1 family.

The catalysed reaction is L-lysyl-[alpha-tubulin] + acetyl-CoA = N(6)-acetyl-L-lysyl-[alpha-tubulin] + CoA + H(+). Its function is as follows. Specifically acetylates 'Lys-40' in alpha-tubulin on the lumenal side of microtubules. Promotes microtubule destabilization and accelerates microtubule dynamics; this activity may be independent of acetylation activity. Acetylates alpha-tubulin with a slow enzymatic rate, due to a catalytic site that is not optimized for acetyl transfer. Enters the microtubule through each end and diffuses quickly throughout the lumen of microtubules. Acetylates only long/old microtubules because of its slow acetylation rate since it does not have time to act on dynamically unstable microtubules before the enzyme is released. The chain is Alpha-tubulin N-acetyltransferase from Giardia intestinalis (strain ATCC 50803 / WB clone C6) (Giardia lamblia).